The following is a 196-amino-acid chain: Imidazole glycerol phosphate synthase subunit HisH (196 aa).

The region spanning Lys2–Leu196 is the Glutamine amidotransferase type-1 domain. Cys77 acts as the Nucleophile in catalysis. Catalysis depends on residues His178 and Glu180.

As to quaternary structure, heterodimer of HisH and HisF.

It localises to the cytoplasm. The enzyme catalyses 5-[(5-phospho-1-deoxy-D-ribulos-1-ylimino)methylamino]-1-(5-phospho-beta-D-ribosyl)imidazole-4-carboxamide + L-glutamine = D-erythro-1-(imidazol-4-yl)glycerol 3-phosphate + 5-amino-1-(5-phospho-beta-D-ribosyl)imidazole-4-carboxamide + L-glutamate + H(+). It carries out the reaction L-glutamine + H2O = L-glutamate + NH4(+). Its pathway is amino-acid biosynthesis; L-histidine biosynthesis; L-histidine from 5-phospho-alpha-D-ribose 1-diphosphate: step 5/9. IGPS catalyzes the conversion of PRFAR and glutamine to IGP, AICAR and glutamate. The HisH subunit catalyzes the hydrolysis of glutamine to glutamate and ammonia as part of the synthesis of IGP and AICAR. The resulting ammonia molecule is channeled to the active site of HisF. The protein is Imidazole glycerol phosphate synthase subunit HisH of Bacteroides fragilis (strain ATCC 25285 / DSM 2151 / CCUG 4856 / JCM 11019 / LMG 10263 / NCTC 9343 / Onslow / VPI 2553 / EN-2).